The primary structure comprises 210 residues: Adenylate kinase isoenzyme 1 (210 aa).

An ATP-binding site is contributed by Gly-30–Thr-35. The interval Ser-50–Val-79 is NMP. AMP-binding positions include Ser-51, Arg-56, Ala-77 to Val-79, Gly-107 to Arg-110, and Gln-114. Residues His-144–Asp-154 form an LID region. Arg-145 is a binding site for ATP. 2 residues coordinate AMP: Arg-151 and Arg-162. Position 190 (Gly-190) interacts with ATP.

This sequence belongs to the adenylate kinase family. AK1 subfamily. Monomer.

Its subcellular location is the cytoplasm. It carries out the reaction AMP + ATP = 2 ADP. Catalyzes the reversible transfer of the terminal phosphate group between ATP and AMP. Plays an important role in cellular energy homeostasis and in adenine nucleotide metabolism. The protein is Adenylate kinase isoenzyme 1 of Caenorhabditis elegans.